The chain runs to 270 residues: Undecaprenyl-diphosphatase (270 aa).

A run of 7 helical transmembrane segments spans residues 1 to 21 (MTWWEALLLGLIQGLTEFIPV), 92 to 112 (FRLGVFILVTLVPTGVAYVLF), 119 to 139 (AFGSPRFTSAMLVGTGVLLLL), 150 to 170 (LSGVKAFVVGVAQSCALVPGI), 193 to 213 (FSFLMLLPVVLGGTVLKGLEL), 223 to 243 (LSLGIGTVAAYGSGIGAIYVV), and 250 to 270 (GNLQYFAYYCFLIGGLGLWLL).

Belongs to the UppP family.

It localises to the cell inner membrane. The catalysed reaction is di-trans,octa-cis-undecaprenyl diphosphate + H2O = di-trans,octa-cis-undecaprenyl phosphate + phosphate + H(+). In terms of biological role, catalyzes the dephosphorylation of undecaprenyl diphosphate (UPP). Confers resistance to bacitracin. The polypeptide is Undecaprenyl-diphosphatase (Salinibacter ruber (strain DSM 13855 / M31)).